Here is a 284-residue protein sequence, read N- to C-terminus: Isopentenyl-diphosphate delta-isomerase (284 aa).

Residue Lys77 coordinates substrate. Mg(2+) contacts are provided by His81 and His92. The region spanning 90–256 (LLHRAFSVFL…SLVFTPWFKL (167 aa)) is the Nudix hydrolase domain. 2 residues coordinate substrate: Arg111 and Lys115. The active site involves Cys127. Position 128 (Ser128) interacts with substrate. A Nudix box motif is present at residues 128 to 172 (SHPLCVPSELGVDSSLEGSKDVNNLTNAVKGAKVAAQRKLEHELG). Mg(2+) contacts are provided by Glu204 and Glu206. Glu206 is a catalytic residue.

This sequence belongs to the IPP isomerase type 1 family. The cofactor is Mg(2+).

It localises to the cytoplasm. The enzyme catalyses isopentenyl diphosphate = dimethylallyl diphosphate. The protein operates within isoprenoid biosynthesis; dimethylallyl diphosphate biosynthesis; dimethylallyl diphosphate from isopentenyl diphosphate: step 1/1. Isopentenyl-diphosphate delta-isomerase; part of the second module of ergosterol biosynthesis pathway that includes the middle steps of the pathway. IDI1 catalyzes the 1,3-allylic rearrangement of isopentenyl (IPP) to its highly electrophilic allylic isomer, dimethylallyl diphosphate (DMAPP). The second module is carried out in the vacuole and involves the formation of farnesyl diphosphate, which is also an important intermediate in the biosynthesis of ubiquinone, dolichol, heme and prenylated proteins. Activity by the mevalonate kinase ERG12 first converts mevalonate into 5-phosphomevalonate. 5-phosphomevalonate is then further converted to 5-diphosphomevalonate by the phosphomevalonate kinase ERG8. The diphosphomevalonate decarboxylase MVD then produces isopentenyl diphosphate. The isopentenyl-diphosphate delta-isomerase IDI1 then catalyzes the 1,3-allylic rearrangement of the homoallylic substrate isopentenyl (IPP) to its highly electrophilic allylic isomer, dimethylallyl diphosphate (DMAPP). Finally the farnesyl diphosphate synthase ERG20 catalyzes the sequential condensation of isopentenyl pyrophosphate with dimethylallyl pyrophosphate, and then with the resultant geranylpyrophosphate to the ultimate product farnesyl pyrophosphate. The polypeptide is Isopentenyl-diphosphate delta-isomerase (Candida albicans (strain SC5314 / ATCC MYA-2876) (Yeast)).